The sequence spans 60 residues: Snake venom metalloproteinase bothrojaractivase (60 aa).

The region spanning Arg-1–Ile-60 is the Peptidase M12B domain. A Ca(2+)-binding site is contributed by Glu-4.

It belongs to the venom metalloproteinase (M12B) family. P-I subfamily. In terms of assembly, monomer. It depends on Zn(2+) as a cofactor. As to expression, expressed by the venom gland.

Its subcellular location is the secreted. Completely inhibited by EDTA and EGTA. Partially inhibited by serine proteinase inhibitors PMSF and benzamidine. Not inhibited by cysteine proteinase inhibitors mercury ions and E-64. Is active without cofactors, although the presence of low concentrations of calcium and zinc ions enhanced its ability to convert prothrombin (F2) into active thrombin. Functionally, prothrombin (F2) activator that is cofactor-independent. Also has fibrinolytic and fibrinogenolytic activity. It degrades the Aalpha-chain and more slowly the Bbeta-chain of fibrin and fibrinogen, while the gamma-chain is only partially and slowly affected. A dose-dependent procoagulant activity is shown in human plasma. This is Snake venom metalloproteinase bothrojaractivase from Bothrops jararaca (Jararaca).